The sequence spans 1451 residues: Glutamate receptor ionotropic, NMDA 2A (1451 aa).

The first 20 residues, 1–20 (MGMFVLLLYTFLYAGDLGHG), serve as a signal peptide directing secretion. Residues 21-547 (AEKSFPVLNI…PSAFLEPFSA (527 aa)) lie on the Extracellular side of the membrane. N-linked (GlcNAc...) asparagine glycosylation is present at asparagine 67. Cysteine 79 and cysteine 312 are disulfide-bonded. Zn(2+) contacts are provided by histidine 120, aspartate 258, and aspartate 274. Asparagine 332, asparagine 372, asparagine 435, and asparagine 436 each carry an N-linked (GlcNAc...) asparagine glycan. Cystine bridges form between cysteine 421–cysteine 447 and cysteine 428–cysteine 448. The L-glutamate site is built by serine 503, threonine 505, and arginine 510. Asparagine 533 is a glycosylation site (N-linked (GlcNAc...) asparagine). Residues 548 to 568 (SVWVMMFVMLLLVSAMAVFIF) traverse the membrane as a helical segment. Over 569–592 (EYFSPVGYNRNLAQGKDPHGPSFT) the chain is Cytoplasmic. A pore-forming region spans residues 591–612 (FTIGKAVWLLWGLVFNNSVPVQ). The segment at residues 593–612 (IGKAVWLLWGLVFNNSVPVQ) is an intramembrane region (discontinuously helical). The Cytoplasmic portion of the chain corresponds to 613-617 (NPKGT). The chain crosses the membrane as a helical span at residues 618–637 (TSKIIVSIWAFFAVIFLASY). Over 638 to 808 (TANLAAFMIQ…VMSSQLDIDN (171 aa)) the chain is Extracellular. N-linked (GlcNAc...) asparagine glycosylation occurs at asparagine 679. Residues serine 681, threonine 682, and aspartate 723 each contribute to the L-glutamate site. Cysteine 737 and cysteine 792 are disulfide-bonded. Residues 809 to 829 (MAGVFYMLAAAMALSLITFVW) traverse the membrane as a helical segment. At 830-1451 (EHLFYWKLRF…KKMPSLESDV (622 aa)) the chain is on the cytoplasmic side. Residues 1011-1022 (TLRQTQGSVNEN) show a composition bias toward polar residues. 2 disordered regions span residues 1011–1080 (TLRQ…VSAK) and 1100–1165 (NRDK…GRLP). 3 stretches are compositionally biased toward basic and acidic residues: residues 1055-1073 (CHID…DNLK), 1100-1113 (NRDK…DKEP), and 1138-1149 (YQDHNDNYRKTE).

It belongs to the glutamate-gated ion channel (TC 1.A.10.1) family. In terms of assembly, heterotetramer. Forms heterotetrameric channels composed of two GluN1/zeta subunits (GRIN1), and two identical GluN2/epsilon subunits (GRIN2A, GRIN2B, GRIN2C or GRIN2D) or GluN3 subunits (GRIN3A or GRIN3B) (in vitro). In vivo, the subunit composition may depend on the expression levels of the different subunits.

The protein localises to the cell membrane. The protein resides in the postsynaptic cell membrane. The catalysed reaction is Ca(2+)(in) = Ca(2+)(out). The enzyme catalyses Na(+)(in) = Na(+)(out). It catalyses the reaction K(+)(in) = K(+)(out). In terms of biological role, component of N-methyl-D-aspartate (NMDA) receptors (NMDARs) that function as heterotetrameric, ligand-gated cation channels with high calcium permeability and voltage-dependent block by Mg(2+). MDARs participate in synaptic plasticity. Channel activation requires binding of the neurotransmitter L-glutamate to the GluN2 subunit, glycine binding to the GluN1 subunit, plus membrane depolarization to eliminate channel inhibition by Mg(2+). NMDARs mediate simultaneously the potasium efflux and the influx of calcium and sodium. Each GluN2 subunit confers differential attributes to channel properties, including activation, deactivation and desensitization kinetics, pH sensitivity, Ca2(+) permeability, and binding to allosteric modulators. Plays a role in dendritic branching in brain neurons and in synaptic plasticity. The sequence is that of Glutamate receptor ionotropic, NMDA 2A from Xenopus laevis (African clawed frog).